The primary structure comprises 96 residues: Large ribosomal subunit protein eL43 (96 aa).

The C4-type zinc-finger motif lies at 41–62; that stretch reads CPVCAFPKLKRAGTSIWVCEKC.

This sequence belongs to the eukaryotic ribosomal protein eL43 family. Zn(2+) is required as a cofactor.

The sequence is that of Large ribosomal subunit protein eL43 from Methanococcus maripaludis (strain C5 / ATCC BAA-1333).